The chain runs to 319 residues: Phosphoribosylformylglycinamidine cyclo-ligase (319 aa).

The protein belongs to the AIR synthase family.

The protein localises to the cytoplasm. The catalysed reaction is 2-formamido-N(1)-(5-O-phospho-beta-D-ribosyl)acetamidine + ATP = 5-amino-1-(5-phospho-beta-D-ribosyl)imidazole + ADP + phosphate + H(+). Its pathway is purine metabolism; IMP biosynthesis via de novo pathway; 5-amino-1-(5-phospho-D-ribosyl)imidazole from N(2)-formyl-N(1)-(5-phospho-D-ribosyl)glycinamide: step 2/2. This chain is Phosphoribosylformylglycinamidine cyclo-ligase, found in Sulfurisphaera tokodaii (strain DSM 16993 / JCM 10545 / NBRC 100140 / 7) (Sulfolobus tokodaii).